We begin with the raw amino-acid sequence, 147 residues long: Ubiquitin-conjugating enzyme E2-16 kDa (147 aa).

Residues 1-147 enclose the UBC core domain; that stretch reads MALKRINKEL…AREWTRKYAI (147 aa). The Glycyl thioester intermediate role is filled by Cys107.

It belongs to the ubiquitin-conjugating enzyme family.

It catalyses the reaction S-ubiquitinyl-[E1 ubiquitin-activating enzyme]-L-cysteine + [E2 ubiquitin-conjugating enzyme]-L-cysteine = [E1 ubiquitin-activating enzyme]-L-cysteine + S-ubiquitinyl-[E2 ubiquitin-conjugating enzyme]-L-cysteine.. It participates in protein modification; protein ubiquitination. Its function is as follows. Catalyzes the covalent attachment of ubiquitin to other proteins. The sequence is that of Ubiquitin-conjugating enzyme E2-16 kDa (UBC1) from Pyricularia oryzae (strain 70-15 / ATCC MYA-4617 / FGSC 8958) (Rice blast fungus).